Reading from the N-terminus, the 230-residue chain is Ribose-5-phosphate isomerase A (230 aa).

Substrate contacts are provided by residues 32-35 (TGST), 85-88 (DGAD), and 98-101 (KGGG). Residue Glu-107 is the Proton acceptor of the active site. Lys-125 contributes to the substrate binding site.

It belongs to the ribose 5-phosphate isomerase family. As to quaternary structure, homodimer.

It carries out the reaction aldehydo-D-ribose 5-phosphate = D-ribulose 5-phosphate. The protein operates within carbohydrate degradation; pentose phosphate pathway; D-ribose 5-phosphate from D-ribulose 5-phosphate (non-oxidative stage): step 1/1. Functionally, catalyzes the reversible conversion of ribose-5-phosphate to ribulose 5-phosphate. The protein is Ribose-5-phosphate isomerase A of Burkholderia ambifaria (strain ATCC BAA-244 / DSM 16087 / CCUG 44356 / LMG 19182 / AMMD) (Burkholderia cepacia (strain AMMD)).